The sequence spans 5911 residues: Nonribosomal peptide synthetase 30 (5911 aa).

The interval 1–22 (MVPEKPTAQSKSGIGEPFRAGD) is disordered. The segment at 352–754 (ALIQPSSTAV…GRKDAQVKIR (403 aa)) is adenylation 1. The region spanning 891–968 (PRPFSVEYSL…EAAAIVARGT (78 aa)) is the Carrier 1 domain. Ser928 carries the O-(pantetheine 4'-phosphoryl)serine modification. Positions 1007–1422 (EDAFPCTPLQ…ERLIFVIDQL (416 aa)) are condensation 1. The segment at 1467-1865 (ERALSQPDRP…SLMFVGRKAD (399 aa)) is adenylation 2. Residues 2001–2077 (QPTSELEAEM…NICSHSYYCS (77 aa)) form the Carrier 2 domain. At Ser2038 the chain carries O-(pantetheine 4'-phosphoryl)serine. Residues 2121-2538 (QDAYPCTPLQ…GPDINMSDIG (418 aa)) form a condensation 2 region. Residues 2568 to 2977 (EEQARLRPEA…GRKDSQVKIR (410 aa)) form an adenylation 3 region. A Carrier 3 domain is found at 3110–3186 (QPSTNAQREL…LIADNSKSIK (77 aa)). The residue at position 3147 (Ser3147) is an O-(pantetheine 4'-phosphoryl)serine. The tract at residues 3227 to 3652 (VQDAYPCTPL…LELVIQAFMA (426 aa)) is condensation 3. Positions 3701–4108 (EERVREQPNA…GRKDSQVKIR (408 aa)) are adenylation 4. Positions 4248 to 4325 (PPTTPLECQM…DIIATMTKNK (78 aa)) constitute a Carrier 4 domain. Ser4285 carries the post-translational modification O-(pantetheine 4'-phosphoryl)serine. Residues 4326–4347 (ATGASRRLPRDDDEPIPHTKYA) are disordered. The tract at residues 4353–4793 (SYAQGRLWFL…SLPLLTEDGR (441 aa)) is condensation 4. The tract at residues 4819 to 5231 (FKEQVSRHPN…GRMDVQVKIR (413 aa)) is adenylation 5. Residues 5360–5436 (KPTTDMEVAL…ALARRQEEIV (77 aa)) form the Carrier 5 domain. Ser5397 is subject to O-(pantetheine 4'-phosphoryl)serine. The condensation 5 stretch occupies residues 5474-5828 (VEDMLPLTSM…GIKMKLHFFT (355 aa)).

This sequence belongs to the NRP synthetase family.

It functions in the pathway secondary metabolite biosynthesis. In terms of biological role, nonribosomal peptide synthetase; part of the gene cluster that mediates the biosynthesis of sansalvamide, a cyclic pentadepsipeptide that shows promising results as potential anti-cancer drug. The nonribosmal peptide synthetase NRPS30 produces sansalvamide by incorporating successively one phenylalanine, one leucine, one alpha-hydroxyisocaproic acid (HICA), one valine and one leucine before sansalvamide is released from by cyclization by the terminal C domain of NRPS30. The HICA residue is probably provided by reduction of alpha-ketoisocaproate by the cluster-specific aldo-keto reductase (NECHADRAFT_45914). In Fusarium vanettenii (strain ATCC MYA-4622 / CBS 123669 / FGSC 9596 / NRRL 45880 / 77-13-4) (Fusarium solani subsp. pisi), this protein is Nonribosomal peptide synthetase 30.